Here is a 474-residue protein sequence, read N- to C-terminus: Pleckstrin homology domain-containing family S member 1 (474 aa).

The 116-residue stretch at 20–135 folds into the PH domain; it reads EVHKRDYFIK…WVSFMTPYCQ (116 aa). Disordered stretches follow at residues 232–251, 272–321, and 449–474; these read IAGP…DQGF, STSA…DDQK, and RDLP…AAGE. The segment covering 238 to 248 has biased composition (polar residues); sequence SGDSIESNSPD. The segment covering 449–458 has biased composition (basic and acidic residues); sequence RDLPELERTP.

The sequence is that of Pleckstrin homology domain-containing family S member 1 from Mus musculus (Mouse).